We begin with the raw amino-acid sequence, 1058 residues long: Ubiquitin-like modifier-activating enzyme 1 Y (1058 aa).

The tract at residues 1 to 22 (MSSSVLSKKRKVSGPDSSLDSS) is disordered. Residues Ala-477, Asp-503, Arg-514, Lys-527, and 575–576 (DN) contribute to the ATP site. Cys-631 serves as the catalytic Glycyl thioester intermediate.

This sequence belongs to the ubiquitin-activating E1 family. In terms of assembly, monomer. Expressed in testis in A spermatogonia and spermatids but not (or at very low levels) in pachytene spermatocytes. Also expressed in Y-bearing ovaries and at very low levels in adrenal gland.

It carries out the reaction ATP + ubiquitin + [E1 ubiquitin-activating enzyme]-L-cysteine = AMP + diphosphate + S-ubiquitinyl-[E1 ubiquitin-activating enzyme]-L-cysteine.. Its pathway is protein modification; protein ubiquitination. In terms of biological role, activates ubiquitin by first adenylating its C-terminal glycine residue with ATP, and thereafter linking this residue to the side chain of a cysteine residue in E1, yielding a ubiquitin-E1 thioester and free AMP. The Y chromosome form could be involved in the survival and proliferation of differentiating spermatogonia. This chain is Ubiquitin-like modifier-activating enzyme 1 Y (Uba1y), found in Mus musculus (Mouse).